A 196-amino-acid polypeptide reads, in one-letter code: Secreted effector protein SseB (196 aa).

The protein belongs to the EspA/SseB family. In terms of assembly, may form a complex with SseC and SseD. Binds to the chaperone SseA.

The protein localises to the secreted. Its subcellular location is the cell surface. Effector proteins function to alter host cell physiology and promote bacterial survival in host tissues. May act as a translocator that mediates translocation of SPI-2 T3SS effector proteins from intraphagosomal bacterial cells into the host cells. SseB is required for correct localization of SseC and SseD on the bacterial cell surface. The polypeptide is Secreted effector protein SseB (sseB) (Salmonella typhimurium (strain LT2 / SGSC1412 / ATCC 700720)).